Consider the following 523-residue polypeptide: GMP synthase [glutamine-hydrolyzing] (523 aa).

Positions 8 to 205 (KILILDFGSQ…VENICGCARS (198 aa)) constitute a Glutamine amidotransferase type-1 domain. Cys-85 acts as the Nucleophile in catalysis. Active-site residues include His-179 and Glu-181. The 193-residue stretch at 206–398 (WTPENIIEDA…LGLPAEMLNR (193 aa)) folds into the GMPS ATP-PPase domain. An ATP-binding site is contributed by 233–239 (SGGVDSS).

As to quaternary structure, homodimer.

It carries out the reaction XMP + L-glutamine + ATP + H2O = GMP + L-glutamate + AMP + diphosphate + 2 H(+). It participates in purine metabolism; GMP biosynthesis; GMP from XMP (L-Gln route): step 1/1. Catalyzes the synthesis of GMP from XMP. In Haemophilus ducreyi (strain 35000HP / ATCC 700724), this protein is GMP synthase [glutamine-hydrolyzing].